Reading from the N-terminus, the 154-residue chain is Ribonuclease H (154 aa).

The region spanning 3 to 144 is the RNase H type-1 domain; that stretch reads ELPVVTIYTD…ADQLARDGIV (142 aa). Mg(2+) contacts are provided by Asp12, Glu50, Asp72, and Asp136.

Belongs to the RNase H family. Monomer. It depends on Mg(2+) as a cofactor.

Its subcellular location is the cytoplasm. The catalysed reaction is Endonucleolytic cleavage to 5'-phosphomonoester.. Endonuclease that specifically degrades the RNA of RNA-DNA hybrids. In Bradyrhizobium diazoefficiens (strain JCM 10833 / BCRC 13528 / IAM 13628 / NBRC 14792 / USDA 110), this protein is Ribonuclease H.